The primary structure comprises 482 residues: Kynurenine 3-monooxygenase (482 aa).

It belongs to the aromatic-ring hydroxylase family. KMO subfamily. Requires FAD as cofactor.

It localises to the mitochondrion outer membrane. It catalyses the reaction L-kynurenine + NADPH + O2 + H(+) = 3-hydroxy-L-kynurenine + NADP(+) + H2O. The protein operates within cofactor biosynthesis; NAD(+) biosynthesis; quinolinate from L-kynurenine: step 1/3. Functionally, catalyzes the hydroxylation of L-kynurenine (L-Kyn) to form 3-hydroxy-L-kynurenine (L-3OHKyn). Required for synthesis of quinolinic acid. The polypeptide is Kynurenine 3-monooxygenase (Phaeosphaeria nodorum (strain SN15 / ATCC MYA-4574 / FGSC 10173) (Glume blotch fungus)).